The following is a 104-amino-acid chain: MKKIVLLMLAIAGIAFAADEAVVNETLKAYSVVAAGIGLGLAALGGAIGMGNTAAATIAGTARNPGLGGKLMTTMFIALAMIEAQVIYALVVAMIALYANPFLG.

2 helical membrane passes run 31 to 51 (SVVA…IGMG) and 75 to 95 (MFIA…VAMI).

The protein belongs to the ATPase C chain family. F-type ATPases have 2 components, F(1) - the catalytic core - and F(0) - the membrane proton channel. F(1) has five subunits: alpha(3), beta(3), gamma(1), delta(1), epsilon(1). F(0) has three main subunits: a(1), b(2) and c(10-14). The alpha and beta chains form an alternating ring which encloses part of the gamma chain. F(1) is attached to F(0) by a central stalk formed by the gamma and epsilon chains, while a peripheral stalk is formed by the delta and b chains.

Its subcellular location is the cell inner membrane. Functionally, f(1)F(0) ATP synthase produces ATP from ADP in the presence of a proton or sodium gradient. F-type ATPases consist of two structural domains, F(1) containing the extramembraneous catalytic core and F(0) containing the membrane proton channel, linked together by a central stalk and a peripheral stalk. During catalysis, ATP synthesis in the catalytic domain of F(1) is coupled via a rotary mechanism of the central stalk subunits to proton translocation. Key component of the F(0) channel; it plays a direct role in translocation across the membrane. A homomeric c-ring of between 10-14 subunits forms the central stalk rotor element with the F(1) delta and epsilon subunits. This Aliarcobacter butzleri (strain RM4018) (Arcobacter butzleri) protein is ATP synthase subunit c.